Here is a 194-residue protein sequence, read N- to C-terminus: MPSSPLRVAVVCSSNQNRSMEAHNILSKRGFSVRSFGTGTHVKLPGPAPDKPNVYDFKTTYDQMYNDLLRKDKELYTQNGILHMLDRNKRIKPRPERFQNCTDLFDLILTCEERVYDQVVEDLNSREQETCQPVHVVNVDIQDNHEEATLGAFLICELCQCIQHTEDMENEIDELLQEFEEKSGRAFLHTVCFY.

Residues 160–187 (QCIQHTEDMENEIDELLQEFEEKSGRAF) adopt a coiled-coil conformation.

It belongs to the SSU72 phosphatase family. As to quaternary structure, interacts with GTF2B (via C-terminus); this interaction is inhibited by SYMPK. Interacts with RB1. Interacts with CD226. Interacts with SYMPK. Highly expressed in the brain. Expressed at low level in most tissues.

It localises to the nucleus. It is found in the cytoplasm. It catalyses the reaction O-phospho-L-seryl-[protein] + H2O = L-seryl-[protein] + phosphate. The enzyme catalyses O-phospho-L-threonyl-[protein] + H2O = L-threonyl-[protein] + phosphate. In terms of biological role, protein phosphatase that catalyzes the dephosphorylation of the C-terminal domain of RNA polymerase II. Plays a role in RNA processing and termination. Plays a role in pre-mRNA polyadenylation via its interaction with SYMPK. The chain is RNA polymerase II subunit A C-terminal domain phosphatase SSU72 (Ssu72) from Mus musculus (Mouse).